A 176-amino-acid chain; its full sequence is 3-hydroxyanthranilate 3,4-dioxygenase (176 aa).

R44 serves as a coordination point for O2. The Fe cation site is built by H48, E54, and H92. E54 lines the substrate pocket. Residues R96 and E106 each contribute to the substrate site. The Fe cation site is built by C121, C124, C158, and C161.

This sequence belongs to the 3-HAO family. In terms of assembly, homodimer. Requires Fe(2+) as cofactor.

The enzyme catalyses 3-hydroxyanthranilate + O2 = (2Z,4Z)-2-amino-3-carboxymuconate 6-semialdehyde. It functions in the pathway cofactor biosynthesis; NAD(+) biosynthesis; quinolinate from L-kynurenine: step 3/3. In terms of biological role, catalyzes the oxidative ring opening of 3-hydroxyanthranilate to 2-amino-3-carboxymuconate semialdehyde, which spontaneously cyclizes to quinolinate. This chain is 3-hydroxyanthranilate 3,4-dioxygenase, found in Xanthomonas euvesicatoria pv. vesicatoria (strain 85-10) (Xanthomonas campestris pv. vesicatoria).